The following is a 219-amino-acid chain: Phosphate-specific transport system accessory protein PhoU homolog 1 (219 aa).

Belongs to the PhoU family. In terms of assembly, homodimer.

It is found in the cytoplasm. Functionally, plays a role in the regulation of phosphate uptake. The chain is Phosphate-specific transport system accessory protein PhoU homolog 1 from Methanothermobacter thermautotrophicus (strain ATCC 29096 / DSM 1053 / JCM 10044 / NBRC 100330 / Delta H) (Methanobacterium thermoautotrophicum).